A 927-amino-acid chain; its full sequence is DNA mismatch repair protein MutS (927 aa).

The disordered stretch occupies residues 44 to 80 (DESLKRPRNRHKPTSVPSIPLDSESQEQLETADNDND). Acidic residues predominate over residues 67-79 (ESQEQLETADNDN). Position 725-732 (725-732 (GPNASGKS)) interacts with ATP.

It belongs to the DNA mismatch repair MutS family.

Its function is as follows. This protein is involved in the repair of mismatches in DNA. It is possible that it carries out the mismatch recognition step. This protein has a weak ATPase activity. The chain is DNA mismatch repair protein MutS from Prochlorococcus marinus (strain MIT 9303).